Here is a 326-residue protein sequence, read N- to C-terminus: Protein FAM50 homolog (326 aa).

Residues 76-112 are disordered; it reads EISNRDLQVARGASSSTSLAKDSQEAREKEEHVAKHT. Positions 97 to 109 are enriched in basic and acidic residues; it reads DSQEAREKEEHVA.

This sequence belongs to the FAM50 family.

The chain is Protein FAM50 homolog from Caenorhabditis briggsae.